A 95-amino-acid chain; its full sequence is Large ribosomal subunit protein eL30 (95 aa).

The protein belongs to the eukaryotic ribosomal protein eL30 family.

The sequence is that of Large ribosomal subunit protein eL30 from Methanospirillum hungatei JF-1 (strain ATCC 27890 / DSM 864 / NBRC 100397 / JF-1).